The chain runs to 2109 residues: General transcription factor 3C polypeptide 1 (2109 aa).

The interval 467–521 (LPEGEDTFLSESDSEEERSSSKRRGRGSQKDTRASANLRPKTQPHHSTPTKGGWK) is disordered. Positions 469 to 482 (EGEDTFLSESDSEE) are enriched in acidic residues. A Glycyl lysine isopeptide (Lys-Gly) (interchain with G-Cter in SUMO2) cross-link involves residue K529. The tract at residues 586-609 (MENPKESSSSLKTGRHSSGQDKPH) is disordered. The residue at position 667 (S667) is a Phosphoserine. A compositionally biased stretch (polar residues) spans 718 to 727 (STANRVKTSQ). A disordered region spans residues 718 to 775 (STANRVKTSQPPVPQGEAEEDSQGKEGPSGSGDSQLSASSRSESGRMKKSDNKMGITP). Position 739 is a phosphoserine (S739). Positions 748-759 (SGDSQLSASSRS) are enriched in low complexity. The segment covering 760–769 (ESGRMKKSDN) has biased composition (basic and acidic residues). Residues K770 and K833 each participate in a glycyl lysine isopeptide (Lys-Gly) (interchain with G-Cter in SUMO2) cross-link. Disordered regions lie at residues 836–857 (SGRA…SEAP) and 1059–1082 (RKNS…ESAM). Residues S1062 and S1068 each carry the phosphoserine modification. Basic and acidic residues predominate over residues 1073–1082 (SLQKEQESAM). K1142 participates in a covalent cross-link: Glycyl lysine isopeptide (Lys-Gly) (interchain with G-Cter in SUMO2). The tract at residues 1202–1241 (SLDRNRRVRGGKSQKRKRLKKDPGKKIKRKKKGEFPGEKS) is disordered. The segment covering 1207-1221 (RRVRGGKSQKRKRLK) has biased composition (basic residues). Phosphoserine is present on residues S1253 and S1611. Residues 1608 to 1631 (KDGSLEDDEDEEDDLDEGVGGKRR) are disordered. Residues 1612–1624 (LEDDEDEEDDLDE) show a composition bias toward acidic residues. Phosphoserine occurs at positions 1632 and 1653. The segment covering 1823–1833 (EDADIQREDPQ) has biased composition (basic and acidic residues). Residues 1823 to 1961 (EDADIQREDP…GSEDPRGFTE (139 aa)) are disordered. Residues 1838–1848 (EGSSSEDSPPE) show a composition bias toward low complexity. Residues S1856, S1865, S1868, S1896, and S1911 each carry the phosphoserine modification. Positions 1916–1926 (LEDTAAAGAAQ) are enriched in low complexity. The segment covering 1937–1947 (SPGQEQLSGQA) has biased composition (polar residues). At S1969 the chain carries Phosphoserine.

It belongs to the TFIIIC subunit 1 family. Part of the TFIIIC subcomplex TFIIIC2, consisting of six subunits, GTF3C1, GTF3C2, GTF3C3, GTF3C4, GTF3C5 and GTF3C6. Interacts with IGHMBP2. Interacts with MAF1.

The protein localises to the nucleus. Required for RNA polymerase III-mediated transcription. Component of TFIIIC that initiates transcription complex assembly on tRNA and is required for transcription of 5S rRNA and other stable nuclear and cytoplasmic RNAs. Binds to the box B promoter element. The chain is General transcription factor 3C polypeptide 1 (GTF3C1) from Homo sapiens (Human).